The primary structure comprises 229 residues: Probable calcium-binding protein CML22 (229 aa).

EF-hand domains are found at residues Glu-53–Ser-88, Leu-89–Leu-124, Ser-145–Pro-180, and Ser-184–Leu-219. Residues Asp-66, Asp-68, Asn-70, Thr-72, and Glu-77 each contribute to the Ca(2+) site.

Its function is as follows. Potential calcium sensor. In Arabidopsis thaliana (Mouse-ear cress), this protein is Probable calcium-binding protein CML22 (CML22).